The primary structure comprises 628 residues: Kelch-like protein diablo (628 aa).

The segment at 1–56 is disordered; sequence MGDLPGSTGGGSGPAAAGNASGNSSSAGNTGLGVAGTTGVDRPPSPARLSHTSEKH. Low complexity predominate over residues 14-29; sequence PAAAGNASGNSSSAGN. One can recognise a BTB domain in the interval 74-141; it reads CDVVLNVGGR…CYTAHIIVEE (68 aa). The 103-residue stretch at 176–278 folds into the BACK domain; it reads CLGIRAFADT…SPKFLVGTVG (103 aa). Kelch repeat units follow at residues 325–371, 373–419, 420–466, 468–513, 515–560, and 561–607; these read VLFA…VLND, LYAV…VLDG, FLYA…VLGG, LYAI…VFNN, IYAV…VVNG, and QLYA…VMRA.

The protein operates within protein modification; protein ubiquitination. Functionally, probable substrate-specific adapter of an E3 ubiquitin-protein ligase complex which mediates the ubiquitination and subsequent proteasomal degradation of target proteins. May have a role in synapse differentiation and growth. The polypeptide is Kelch-like protein diablo (Drosophila persimilis (Fruit fly)).